Consider the following 353-residue polypeptide: Photosystem II D2 protein (353 aa).

An N-acetylthreonine modification is found at Thr2. Thr2 carries the post-translational modification Phosphothreonine. Residues 41–61 traverse the membrane as a helical segment; sequence CAYFAVGGWFTGTTFVTSWYT. His118 contacts chlorophyll a. Residues 125–141 traverse the membrane as a helical segment; the sequence is GFMLRQFELARSVQLRP. Gln130 and Asn143 together coordinate pheophytin a. The helical transmembrane segment at 153 to 166 threads the bilayer; sequence VFVSVFLIYPLGQS. His198 contributes to the chlorophyll a binding site. The helical transmembrane segment at 208-228 threads the bilayer; it reads AALLCAIHGATVENTLFEDGD. His215 and Phe262 together coordinate a plastoquinone. His215 serves as a coordination point for Fe cation. His269 contacts Fe cation. A helical membrane pass occupies residues 279-295; that stretch reads GLWMSALGVVGLALNLR.

It belongs to the reaction center PufL/M/PsbA/D family. PSII is composed of 1 copy each of membrane proteins PsbA, PsbB, PsbC, PsbD, PsbE, PsbF, PsbH, PsbI, PsbJ, PsbK, PsbL, PsbM, PsbT, PsbX, PsbY, PsbZ, Psb30/Ycf12, at least 3 peripheral proteins of the oxygen-evolving complex and a large number of cofactors. It forms dimeric complexes. The D1/D2 heterodimer binds P680, chlorophylls that are the primary electron donor of PSII, and subsequent electron acceptors. It shares a non-heme iron and each subunit binds pheophytin, quinone, additional chlorophylls, carotenoids and lipids. There is also a Cl(-1) ion associated with D1 and D2, which is required for oxygen evolution. The PSII complex binds additional chlorophylls, carotenoids and specific lipids. serves as cofactor.

The protein localises to the plastid. Its subcellular location is the chloroplast thylakoid membrane. The catalysed reaction is 2 a plastoquinone + 4 hnu + 2 H2O = 2 a plastoquinol + O2. Its function is as follows. Photosystem II (PSII) is a light-driven water:plastoquinone oxidoreductase that uses light energy to abstract electrons from H(2)O, generating O(2) and a proton gradient subsequently used for ATP formation. It consists of a core antenna complex that captures photons, and an electron transfer chain that converts photonic excitation into a charge separation. The D1/D2 (PsbA/PsbD) reaction center heterodimer binds P680, the primary electron donor of PSII as well as several subsequent electron acceptors. D2 is needed for assembly of a stable PSII complex. This chain is Photosystem II D2 protein, found in Lactuca sativa (Garden lettuce).